The chain runs to 100 residues: Large ribosomal subunit protein uL23 (100 aa).

The protein belongs to the universal ribosomal protein uL23 family. In terms of assembly, part of the 50S ribosomal subunit. Contacts protein L29, and trigger factor when it is bound to the ribosome.

Its function is as follows. One of the early assembly proteins it binds 23S rRNA. One of the proteins that surrounds the polypeptide exit tunnel on the outside of the ribosome. Forms the main docking site for trigger factor binding to the ribosome. In Colwellia psychrerythraea (strain 34H / ATCC BAA-681) (Vibrio psychroerythus), this protein is Large ribosomal subunit protein uL23.